Here is a 145-residue protein sequence, read N- to C-terminus: Large ribosomal subunit protein uL11m (145 aa).

It belongs to the universal ribosomal protein uL11 family.

It is found in the mitochondrion. In Reclinomonas americana, this protein is Large ribosomal subunit protein uL11m (RPL11).